The chain runs to 392 residues: Probable nucleoredoxin 3 (392 aa).

2 Thioredoxin domains span residues 17-171 (LYSI…DSKR) and 177-326 (EKLL…ELKA).

The protein belongs to the nucleoredoxin family.

The catalysed reaction is [protein]-dithiol + NAD(+) = [protein]-disulfide + NADH + H(+). The enzyme catalyses [protein]-dithiol + NADP(+) = [protein]-disulfide + NADPH + H(+). Functionally, probable thiol-disulfide oxidoreductase that may participate in various redox reactions. This Arabidopsis thaliana (Mouse-ear cress) protein is Probable nucleoredoxin 3.